Reading from the N-terminus, the 340-residue chain is Protein-arginine kinase (340 aa).

The 231-residue stretch at 14-244 folds into the Phosphagen kinase C-terminal domain; it reads IVITTRIRLA…EQIINQENLS (231 aa). ATP contacts are provided by residues 17-21, His81, Arg115, 166-170, and 197-202; these read TTRIR, RASVM, and RGLWGE.

Belongs to the ATP:guanido phosphotransferase family.

The enzyme catalyses L-arginyl-[protein] + ATP = N(omega)-phospho-L-arginyl-[protein] + ADP + H(+). Its function is as follows. Catalyzes the specific phosphorylation of arginine residues in proteins. The chain is Protein-arginine kinase from Clostridium acetobutylicum (strain ATCC 824 / DSM 792 / JCM 1419 / IAM 19013 / LMG 5710 / NBRC 13948 / NRRL B-527 / VKM B-1787 / 2291 / W).